A 276-amino-acid chain; its full sequence is MPHRSLVCFAAPADKKAFMELVKTLRYRTEAPISDCSAALKETDGDMDAAMQVLRKRGAARAMKKGDRVTEHGFVVSCVGSTPASGAAIVTICSETDFAARNEHFQKVCVQARDQLCKLMDATNGAVLANPEEAVKHLSDVMAEELRVAIAVLGENMRVRSIAPLVPAPHMSERLLIGSYTHGSLNVDNVGRIVGLVALSQVRENEVVPKDVLTSVGRHFVATSGAEGNYAHQNFFGSETETVGKWLKQRGLKFSSSLVQEFGKEPVVHTAPEPHR.

Belongs to the EF-Ts family.

The protein resides in the mitochondrion. Its function is as follows. Associates with the EF-Tu.GDP complex and induces the exchange of GDP to GTP. It remains bound to the aminoacyl-tRNA.EF-Tu.GTP complex up to the GTP hydrolysis stage on the ribosome. In Leishmania infantum, this protein is Elongation factor Ts, mitochondrial.